The sequence spans 299 residues: 4-diphosphocytidyl-2-C-methyl-D-erythritol kinase (299 aa).

The active site involves Lys16. 97 to 107 (PVASGIGGGSA) is a binding site for ATP. The active site involves Asp140.

This sequence belongs to the GHMP kinase family. IspE subfamily.

It catalyses the reaction 4-CDP-2-C-methyl-D-erythritol + ATP = 4-CDP-2-C-methyl-D-erythritol 2-phosphate + ADP + H(+). It functions in the pathway isoprenoid biosynthesis; isopentenyl diphosphate biosynthesis via DXP pathway; isopentenyl diphosphate from 1-deoxy-D-xylulose 5-phosphate: step 3/6. Catalyzes the phosphorylation of the position 2 hydroxy group of 4-diphosphocytidyl-2C-methyl-D-erythritol. The protein is 4-diphosphocytidyl-2-C-methyl-D-erythritol kinase of Roseobacter denitrificans (strain ATCC 33942 / OCh 114) (Erythrobacter sp. (strain OCh 114)).